The following is a 77-amino-acid chain: Small ribosomal subunit protein bS18 (77 aa).

This sequence belongs to the bacterial ribosomal protein bS18 family. Part of the 30S ribosomal subunit. Forms a tight heterodimer with protein bS6.

In terms of biological role, binds as a heterodimer with protein bS6 to the central domain of the 16S rRNA, where it helps stabilize the platform of the 30S subunit. This chain is Small ribosomal subunit protein bS18, found in Shouchella clausii (strain KSM-K16) (Alkalihalobacillus clausii).